A 311-amino-acid chain; its full sequence is Meteorin-like protein (311 aa).

The first 45 residues, 1–45, serve as a signal peptide directing secretion; sequence MRGAVWAARRRAGQQWPRSPGPGPGPPPPPPLLLLLLLLLGGASA. Cysteine 52 and cysteine 75 are joined by a disulfide. N-linked (GlcNAc...) asparagine glycosylation occurs at asparagine 103. Intrachain disulfides connect cysteine 107–cysteine 143, cysteine 188–cysteine 260, cysteine 191–cysteine 284, and cysteine 201–cysteine 306.

The protein belongs to the meteorin family. Post-translationally, N-glycosylated. In terms of tissue distribution, highly expressed in subcutaneous adipose tissue.

Its subcellular location is the secreted. Its function is as follows. Hormone induced following exercise or cold exposure that promotes energy expenditure. Induced either in the skeletal muscle after exercise or in adipose tissue following cold exposure and is present in the circulation. Able to stimulate energy expenditure associated with the browning of the white fat depots and improves glucose tolerance. Does not promote an increase in a thermogenic gene program via direct action on adipocytes, but acts by stimulating several immune cell subtypes to enter the adipose tissue and activate their prothermogenic actions. Stimulates an eosinophil-dependent increase in IL4 expression and promotes alternative activation of adipose tissue macrophages, which are required for the increased expression of the thermogenic and anti-inflammatory gene programs in fat. Required for some cold-induced thermogenic responses, suggesting a role in metabolic adaptations to cold temperatures. The sequence is that of Meteorin-like protein (Metrnl) from Mus musculus (Mouse).